The sequence spans 953 residues: Translation initiation factor IF-2 (953 aa).

Residues 55-340 form a disordered region; that stretch reads GVTTEAPAAS…KSKRQKRNEY (286 aa). The segment covering 81–93 has biased composition (low complexity); sequence KPAATPQQAAKPA. A compositionally biased stretch (pro residues) spans 110 to 119; that stretch reads PKPAAKPVPK. Composition is skewed to low complexity over residues 123–133 and 143–160; these read SAAKAESSAPK and KPAA…MPRP. Gly residues predominate over residues 202 to 219; sequence PGGGPRPGGNRPQGGQGG. Low complexity predominate over residues 233–248; the sequence is QPRPQGGSRSQQSGGQ. Residues 280 to 323 are compositionally biased toward gly residues; sequence NGRGGAGGQGGRPGFGGGRPGGGGSAGGRGGRRGGTAGAFGRPG. A compositionally biased stretch (basic residues) spans 327–336; the sequence is RKGRKSKRQK. The tr-type G domain occupies 449 to 621; sequence KRPPVVTVMG…VLLTADASLD (173 aa). Residues 458–465 are G1; sequence GHVDHGKT. Residue 458–465 coordinates GTP; that stretch reads GHVDHGKT. Positions 483–487 are G2; that stretch reads GITQG. Positions 508 to 511 are G3; sequence DTPG. Residues 508-512 and 562-565 contribute to the GTP site; these read DTPGH and NKID. The tract at residues 562–565 is G4; it reads NKID. Residues 598–600 form a G5 region; the sequence is SAK.

This sequence belongs to the TRAFAC class translation factor GTPase superfamily. Classic translation factor GTPase family. IF-2 subfamily.

It localises to the cytoplasm. Functionally, one of the essential components for the initiation of protein synthesis. Protects formylmethionyl-tRNA from spontaneous hydrolysis and promotes its binding to the 30S ribosomal subunits. Also involved in the hydrolysis of GTP during the formation of the 70S ribosomal complex. This chain is Translation initiation factor IF-2, found in Corynebacterium diphtheriae (strain ATCC 700971 / NCTC 13129 / Biotype gravis).